The following is a 516-amino-acid chain: MSNKPIADMIETIEHFAQTQPSYPVYNVLGQEHTYGDLKSDSDSLAAVIDQLGLPEKSPVVVFGGQEYEMLATFVALTKSGHAYIPIDSHSALERVSAILEVAEPSLIIAISAFPLEQVSTPMINLAQVQEAFAQGNNYEITHPVKGDDNYYIIFTSGTTGQPKGVQISHDNLLSFTNWMITDKEFATPSRPQMLAQPPYSFDLSVMYWAPTLALGGTLFTLPSVITQDFKQLFAAIFSLPIAIWTSTPSFADMAMLSEYFNSEKMPGITHFYFDGEELTVKTAQKLRERFPNARIINAYGPTEATVALSAVAVTDEMLATLKRLPIGYTKADSPTFIIDEEGNKLPNGEQGEIIVSGPAVSKGYMNNPEKTAEAFFEFEDLPAYHTGDVGTMTDEGLLLYGGRMDFQIKFNGYRIELEDVSQNLNKSRFIESAVAVPRYNKDHKVQNLLAYVILKDSVREQFERDIDITKAIKEDLTDIMMSYMIPSKFLYRDSLPLTPNGKIDIKGLINEVNKR.

Residue 156-157 coordinates ATP; the sequence is TS. D203 is a D-alanine binding site. 298 to 303 is a binding site for ATP; sequence NAYGPT. Residue V307 participates in D-alanine binding. Residues D389, 401-404, and K503 each bind ATP; that span reads YGGR. K503 contacts D-alanine.

The protein belongs to the ATP-dependent AMP-binding enzyme family. DltA subfamily.

Its subcellular location is the cytoplasm. It catalyses the reaction holo-[D-alanyl-carrier protein] + D-alanine + ATP = D-alanyl-[D-alanyl-carrier protein] + AMP + diphosphate. It participates in cell wall biogenesis; lipoteichoic acid biosynthesis. In terms of biological role, catalyzes the first step in the D-alanylation of lipoteichoic acid (LTA), the activation of D-alanine and its transfer onto the D-alanyl carrier protein (Dcp) DltC. In an ATP-dependent two-step reaction, forms a high energy D-alanyl-AMP intermediate, followed by transfer of the D-alanyl residue as a thiol ester to the phosphopantheinyl prosthetic group of the Dcp. D-alanylation of LTA plays an important role in modulating the properties of the cell wall in Gram-positive bacteria, influencing the net charge of the cell wall. This Streptococcus pneumoniae (strain 70585) protein is D-alanine--D-alanyl carrier protein ligase.